The sequence spans 50 residues: Defensin-like protein 1 (50 aa).

4 disulfides stabilise this stretch: cysteine 3–cysteine 50, cysteine 14–cysteine 35, cysteine 20–cysteine 44, and cysteine 24–cysteine 46.

Belongs to the DEFL family.

It is found in the secreted. In terms of biological role, possesses antimicrobial activity sensitive to inorganic cations. Has no inhibitory effect on insect gut alpha-amylase. Induces potential changes in fungal membranes and increased K+ efflux and Ca(2+) uptake. Interacts with sphingolipids and ergosterols found in fungal plasma membranes. The sequence is that of Defensin-like protein 1 from Dahlia merckii (Bedding dahlia).